We begin with the raw amino-acid sequence, 175 residues long: Glutamyl-tRNA(Gln) amidotransferase subunit F, mitochondrial (175 aa).

Residues 1-19 (MLKVSARHAPVLRLPRRFY) constitute a mitochondrion transit peptide.

This sequence belongs to the GatF family. Subunit of the heterotrimeric GatFAB amidotransferase (AdT) complex, composed of A, B and F subunits.

Its subcellular location is the mitochondrion inner membrane. It carries out the reaction L-glutamyl-tRNA(Gln) + L-glutamine + ATP + H2O = L-glutaminyl-tRNA(Gln) + L-glutamate + ADP + phosphate + H(+). In terms of biological role, allows the formation of correctly charged Gln-tRNA(Gln) through the transamidation of misacylated Glu-tRNA(Gln) in the mitochondria. The reaction takes place in the presence of glutamine and ATP through an activated gamma-phospho-Glu-tRNA(Gln). Required for proper protein synthesis within the mitochondrion. The sequence is that of Glutamyl-tRNA(Gln) amidotransferase subunit F, mitochondrial from Lachancea thermotolerans (strain ATCC 56472 / CBS 6340 / NRRL Y-8284) (Yeast).